The following is a 309-amino-acid chain: tRNA dimethylallyltransferase 1 (309 aa).

Residue 14 to 21 (GPTASGKS) coordinates ATP. Residue 16 to 21 (TASGKS) participates in substrate binding. The interaction with substrate tRNA stretch occupies residues 39-42 (DSMQ).

It belongs to the IPP transferase family. As to quaternary structure, monomer. Requires Mg(2+) as cofactor.

The catalysed reaction is adenosine(37) in tRNA + dimethylallyl diphosphate = N(6)-dimethylallyladenosine(37) in tRNA + diphosphate. Its function is as follows. Catalyzes the transfer of a dimethylallyl group onto the adenine at position 37 in tRNAs that read codons beginning with uridine, leading to the formation of N6-(dimethylallyl)adenosine (i(6)A). This chain is tRNA dimethylallyltransferase 1, found in Pelobacter propionicus (strain DSM 2379 / NBRC 103807 / OttBd1).